An 89-amino-acid polypeptide reads, in one-letter code: ATP synthase subunit H, mitochondrial (89 aa).

As to quaternary structure, F-type ATP synthases have 2 components, the catalytic core F(1) and the membrane-embedded component F(0), linked together by a central stalk and a peripheral stalk. The central stalk, also called rotor shaft, is often seen as part of F(1). The peripheral stalk is seen as part of F(0). F(0) contains the membrane channel next to the rotor. F-type ATP synthases form dimers but each monomer functions independently in ATP generation. The dimer consists of 18 different polypeptides: ATP1 (subunit alpha, part of F(1), 3 molecules per monomer), ATP2 (subunit beta, part of F(1), 3 molecules per monomer), ATP3 (subunit gamma, part of the central stalk), ATP4 (subunit b, part of the peripheral stalk), ATP5/OSCP (subunit 5/OSCP, part of the peripheral stalk), ATP6 (subunit a, part of the peripheral stalk), ATP7 (subunit d, part of the peripheral stalk), ATP8 (subunit 8, part of the peripheral stalk), OLI1 (subunit c, part of the rotor, 10 molecules per monomer), ATP14 (subunit H, part of the peripheral stalk), ATP15 (subunit epsilon, part of the central stalk), ATP16 (subunit delta, part of the central stalk), ATP17 (subunit f, part of the peripheral stalk), ATP18 (subunit i/j, part of the peripheral stalk). Dimer-specific subunits are ATP19 (subunit k, at interface between monomers), ATP20 (subunit g, at interface between monomers), TIM11 (subunit e, at interface between monomers). Also contains subunit L.

It is found in the mitochondrion inner membrane. In terms of biological role, mitochondrial membrane ATP synthase (F(1)F(0) ATP synthase or Complex V) produces ATP from ADP in the presence of a proton gradient across the membrane which is generated by electron transport complexes of the respiratory chain. F-type ATP synthases consist of two structural domains, F(1) - containing the extramembraneous catalytic core, and F(0) - containing the membrane proton channel, linked together by a central stalk and a peripheral stalk. During catalysis, ATP synthesis in the catalytic domain of F(1) is coupled via a rotary mechanism of the central stalk subunits to proton translocation. Part of the peripheral stalk. This is ATP synthase subunit H, mitochondrial from Pichia angusta (Yeast).